Reading from the N-terminus, the 408-residue chain is E3 ubiquitin-protein ligase At1g12760 (408 aa).

The tract at residues 1–52 is disordered; sequence MSTETTTGNSSLIPASSSSSSSDAIDPAPLLFNGDDNEGNNGGGGGERRSVR. The span at 10-34 shows a compositional bias: low complexity; that stretch reads SSLIPASSSSSSSDAIDPAPLLFNG. 2 helical membrane passes run 100 to 120 and 133 to 153; these read VVVL…AILV and VWLL…CVEY. Residues 160 to 195 form a disordered region; the sequence is RTNRTTTTTPPRSRSSSSSSSSSSLEEEALGSRRNS. Low complexity predominate over residues 163–183; it reads RTTTTTPPRSRSSSSSSSSSS. 3 consecutive transmembrane segments (helical) span residues 219–239, 254–274, and 275–295; these read ANTM…SAGG, IVFL…ACVI, and GIAV…VADQ. The RING-type; atypical zinc-finger motif lies at 353-394; that stretch reads CCICLSAYEDGTELRELPCGHHFHCSCVDKWLYINATCPLCK.

The protein localises to the membrane. The enzyme catalyses S-ubiquitinyl-[E2 ubiquitin-conjugating enzyme]-L-cysteine + [acceptor protein]-L-lysine = [E2 ubiquitin-conjugating enzyme]-L-cysteine + N(6)-ubiquitinyl-[acceptor protein]-L-lysine.. The protein operates within protein modification; protein ubiquitination. In terms of biological role, mediates E2-dependent protein ubiquitination in vitro. The chain is E3 ubiquitin-protein ligase At1g12760 from Arabidopsis thaliana (Mouse-ear cress).